The chain runs to 266 residues: Tryptophan synthase alpha chain (266 aa).

Active-site proton acceptor residues include Glu49 and Asp60.

It belongs to the TrpA family. As to quaternary structure, tetramer of two alpha and two beta chains.

It catalyses the reaction (1S,2R)-1-C-(indol-3-yl)glycerol 3-phosphate + L-serine = D-glyceraldehyde 3-phosphate + L-tryptophan + H2O. It participates in amino-acid biosynthesis; L-tryptophan biosynthesis; L-tryptophan from chorismate: step 5/5. Functionally, the alpha subunit is responsible for the aldol cleavage of indoleglycerol phosphate to indole and glyceraldehyde 3-phosphate. The polypeptide is Tryptophan synthase alpha chain (Chloroflexus aurantiacus (strain ATCC 29364 / DSM 637 / Y-400-fl)).